Reading from the N-terminus, the 1430-residue chain is rRNA biogenesis protein RRP5 (1430 aa).

S1 motif domains follow at residues Asp-74–Lys-160, Gly-176–Val-238, Gly-261–Asn-329, Gly-447–Arg-511, Gly-531–Pro-592, and Gln-697–Lys-771. A disordered region spans residues Lys-1041 to Lys-1145. The segment covering Thr-1043–Thr-1053 has biased composition (polar residues). 2 stretches are compositionally biased toward basic and acidic residues: residues Val-1057–Thr-1082 and Ser-1135–Lys-1145. Positions Leu-1119–Asn-1157 form a coiled coil. 6 HAT repeats span residues Lys-1161–Ser-1193, Thr-1195–Val-1232, Lys-1265–Trp-1297, Gly-1299–Lys-1333, Asp-1335–Lys-1367, and Gly-1369–Asn-1404.

It is found in the nucleus. The protein resides in the nucleolus. Involved in rRNA processing or maturation during ribosome biogenesis. The chain is rRNA biogenesis protein RRP5 from Drosophila melanogaster (Fruit fly).